We begin with the raw amino-acid sequence, 631 residues long: Phosphomethylpyrimidine synthase (631 aa).

Substrate contacts are provided by residues asparagine 231, methionine 260, tyrosine 289, histidine 325, 345 to 347 (SRG), 386 to 389 (DGLR), and glutamate 425. Histidine 429 is a binding site for Zn(2+). Position 452 (tyrosine 452) interacts with substrate. Histidine 493 is a Zn(2+) binding site. The [4Fe-4S] cluster site is built by cysteine 573, cysteine 576, and cysteine 581.

Belongs to the ThiC family. As to quaternary structure, homodimer. It depends on [4Fe-4S] cluster as a cofactor.

The catalysed reaction is 5-amino-1-(5-phospho-beta-D-ribosyl)imidazole + S-adenosyl-L-methionine = 4-amino-2-methyl-5-(phosphooxymethyl)pyrimidine + CO + 5'-deoxyadenosine + formate + L-methionine + 3 H(+). It functions in the pathway cofactor biosynthesis; thiamine diphosphate biosynthesis. In terms of biological role, catalyzes the synthesis of the hydroxymethylpyrimidine phosphate (HMP-P) moiety of thiamine from aminoimidazole ribotide (AIR) in a radical S-adenosyl-L-methionine (SAM)-dependent reaction. The chain is Phosphomethylpyrimidine synthase from Acinetobacter baylyi (strain ATCC 33305 / BD413 / ADP1).